The following is a 325-amino-acid chain: S-adenosylmethionine carrier 1, chloroplastic/mitochondrial (325 aa).

The N-terminal 38 residues, 1 to 38 (MAPLTLSVDVKSSSATSHDVSKRVMQSSQLKINKGFFA), are a transit peptide targeting the chloroplast and mitochondrion. 3 Solcar repeats span residues 52-124 (RTLF…TKQK), 133-215 (LSAV…LCLG), and 228-310 (ENAL…TKRT). 5 consecutive transmembrane segments (helical) span residues 55 to 75 (FEGF…LYPI), 97 to 117 (YSGL…FVGV), 132 to 152 (HLSA…ASLI), 230 to 250 (ALIG…LDVI), and 285 to 305 (GIGP…GVLE).

It belongs to the mitochondrial carrier (TC 2.A.29) family. In terms of tissue distribution, expressed in seedlings, cotyledons, leaves and flowers. Lower levels of expression in stems and roots. Not detected in senescent leaves, petals and pollen grains.

It localises to the mitochondrion membrane. The protein resides in the plastid. It is found in the chloroplast membrane. Inhibited strongly by tannic acid, bromocresol purple, mercuric chloride, mersalyl, p-hydroxymercuribenzoate, S-adenosylhomocysteine, S-adenosylcysteine and adenosylornithine, and to a lesser extent by N-ethylmaleimide, bathophenanthroline and pyridoxal-5'-P. In terms of biological role, transporter involved in exchange reactions through membranes. Has a low uniporter activity. Specifically mediates the transport of S-adenosylmethionine (SAM) and its closest analogs. Probably involved in the uptake of SAM in exchange for S-adenosylhomocysteine (SAHC), which is produced from SAM in the mitochondrial matrix and plastidial stroma by methyltransferase activities. This Arabidopsis thaliana (Mouse-ear cress) protein is S-adenosylmethionine carrier 1, chloroplastic/mitochondrial (SAMC1).